The chain runs to 317 residues: Protein KlaC (317 aa).

Its function is as follows. Belongs to the kla operon, which is associated with cryptic tellurite resistance, and IncW plasmid fertility inhibition. The polypeptide is Protein KlaC (klaC) (Escherichia coli).